The sequence spans 161 residues: Phosphopantetheine adenylyltransferase (161 aa).

Residue S10 coordinates substrate. ATP-binding positions include 10–11 (SF) and H18. Substrate is bound by residues K42, A75, and R89. Residues 90–92 (GLR), E100, and 125–131 (LSPISSS) contribute to the ATP site.

It belongs to the bacterial CoaD family. In terms of assembly, homohexamer. The cofactor is Mg(2+).

The protein localises to the cytoplasm. It catalyses the reaction (R)-4'-phosphopantetheine + ATP + H(+) = 3'-dephospho-CoA + diphosphate. It functions in the pathway cofactor biosynthesis; coenzyme A biosynthesis; CoA from (R)-pantothenate: step 4/5. In terms of biological role, reversibly transfers an adenylyl group from ATP to 4'-phosphopantetheine, yielding dephospho-CoA (dPCoA) and pyrophosphate. The sequence is that of Phosphopantetheine adenylyltransferase from Streptococcus agalactiae serotype III (strain NEM316).